We begin with the raw amino-acid sequence, 743 residues long: Alpha-N-acetylglucosaminidase (743 aa).

A signal peptide spans 1-23; that stretch reads MEAVAVAAAVGVLLLAGAGGAAG. 6 N-linked (GlcNAc...) asparagine glycosylation sites follow: asparagine 261, asparagine 272, asparagine 435, asparagine 503, asparagine 526, and asparagine 532.

The protein belongs to the glycosyl hydrolase 89 family. In terms of assembly, monomer and homodimer. As to expression, liver, ovary, peripheral blood leukocytes, testis, prostate, spleen, colon, lung, placenta and kidney.

Its subcellular location is the lysosome. The enzyme catalyses Hydrolysis of terminal non-reducing N-acetyl-D-glucosamine residues in N-acetyl-alpha-D-glucosaminides.. In terms of biological role, involved in the degradation of heparan sulfate. The chain is Alpha-N-acetylglucosaminidase (NAGLU) from Homo sapiens (Human).